The chain runs to 225 residues: UPF0758 protein Ssed_0385 (225 aa).

An MPN domain is found at 102–224 (ILSDPDLTRD…IVSFAERGWI (123 aa)). H173, H175, and D186 together coordinate Zn(2+). The short motif at 173–186 (HNHPSGVAEPSLAD) is the JAMM motif element.

The protein belongs to the UPF0758 family.

The chain is UPF0758 protein Ssed_0385 from Shewanella sediminis (strain HAW-EB3).